The following is a 379-amino-acid chain: tRNA(Met) cytidine acetate ligase (379 aa).

ATP-binding positions include 8 to 21, Gly-97, Asn-153, and Arg-176; that span reads IAEF…HEYL.

The protein belongs to the TmcAL family.

It localises to the cytoplasm. The enzyme catalyses cytidine(34) in elongator tRNA(Met) + acetate + ATP = N(4)-acetylcytidine(34) in elongator tRNA(Met) + AMP + diphosphate. Catalyzes the formation of N(4)-acetylcytidine (ac(4)C) at the wobble position of elongator tRNA(Met), using acetate and ATP as substrates. First activates an acetate ion to form acetyladenylate (Ac-AMP) and then transfers the acetyl group to tRNA to form ac(4)C34. The sequence is that of tRNA(Met) cytidine acetate ligase from Lactococcus lactis subsp. cremoris (strain MG1363).